A 96-amino-acid chain; its full sequence is MPGKIAVEVAYALPEKQYLQRVTLQEGATVEEAIRASGLLELRTDIDLTKNKVGIYSHPAKLSDIVHDGDRVEIYRPLIADPKELRRQRAEKSANK.

This sequence belongs to the UPF0125 (RnfH) family.

This is Protein RnfH from Escherichia coli O81 (strain ED1a).